The chain runs to 178 residues: Large ribosomal subunit protein uL16 (178 aa).

Belongs to the universal ribosomal protein uL16 family.

This is Large ribosomal subunit protein uL16 from Saccharolobus solfataricus (strain ATCC 35092 / DSM 1617 / JCM 11322 / P2) (Sulfolobus solfataricus).